The following is a 178-amino-acid chain: Fluoride-specific ion channel FluC 2 (178 aa).

4 helical membrane-spanning segments follow: residues 25-45 (PDIH…GTAI), 63-83 (FVAN…LAGA), 97-117 (GLGM…LEGF), and 129-149 (IAYL…GVWA). 2 residues coordinate Na(+): Gly-104 and Ser-107.

Belongs to the fluoride channel Fluc/FEX (TC 1.A.43) family.

Its subcellular location is the cell membrane. The catalysed reaction is fluoride(in) = fluoride(out). With respect to regulation, na(+) is not transported, but it plays an essential structural role and its presence is essential for fluoride channel function. In terms of biological role, fluoride-specific ion channel. Important for reducing fluoride concentration in the cell, thus reducing its toxicity. The protein is Fluoride-specific ion channel FluC 2 of Bifidobacterium longum (strain NCC 2705).